The chain runs to 179 residues: Large ribosomal subunit protein uL5 (179 aa).

It belongs to the universal ribosomal protein uL5 family. In terms of assembly, part of the 50S ribosomal subunit; part of the 5S rRNA/L5/L18/L25 subcomplex. Contacts the 5S rRNA and the P site tRNA. Forms a bridge to the 30S subunit in the 70S ribosome.

This is one of the proteins that bind and probably mediate the attachment of the 5S RNA into the large ribosomal subunit, where it forms part of the central protuberance. In the 70S ribosome it contacts protein S13 of the 30S subunit (bridge B1b), connecting the 2 subunits; this bridge is implicated in subunit movement. Contacts the P site tRNA; the 5S rRNA and some of its associated proteins might help stabilize positioning of ribosome-bound tRNAs. In Shewanella amazonensis (strain ATCC BAA-1098 / SB2B), this protein is Large ribosomal subunit protein uL5.